The following is a 142-amino-acid chain: 2-aminomuconate deaminase (142 aa).

Belongs to the 2-aminomuconate deaminase family. As to quaternary structure, homotetramer.

The enzyme catalyses (2Z,4E)-2-aminomuconate + H2O = (3E)-2-oxohex-3-enedioate + NH4(+). With respect to regulation, slightly inhibited by Pb(2+), Hg(+) and Cu(2+). Functionally, involved in the modified meta-cleavage pathway for the 2-aminophenol catabolism. Only active toward 2-aminomuconic acid. The sequence is that of 2-aminomuconate deaminase (amnD) from Pseudomonas sp.